A 131-amino-acid polypeptide reads, in one-letter code: Ribosome-binding factor A (131 aa).

Belongs to the RbfA family. Monomer. Binds 30S ribosomal subunits, but not 50S ribosomal subunits or 70S ribosomes.

The protein resides in the cytoplasm. Functionally, one of several proteins that assist in the late maturation steps of the functional core of the 30S ribosomal subunit. Associates with free 30S ribosomal subunits (but not with 30S subunits that are part of 70S ribosomes or polysomes). Required for efficient processing of 16S rRNA. May interact with the 5'-terminal helix region of 16S rRNA. This is Ribosome-binding factor A from Pseudomonas fluorescens (strain SBW25).